A 198-amino-acid polypeptide reads, in one-letter code: DnaJ homolog subfamily C member 12 (198 aa).

At methionine 1 the chain carries N-acetylmethionine. Residues 14–79 (DYYTLLGCDE…ESRARYDHWR (66 aa)) form the J domain. Over residues 114–156 (EESDKTHTTKMENEECNEQRERKKEELASTAEKTEQKEPKPLE) the composition is skewed to basic and acidic residues. The segment at 114-169 (EESDKTHTTKMENEECNEQRERKKEELASTAEKTEQKEPKPLEKSVSPQNSDSSGF) is disordered. Phosphoserine is present on residues serine 160, serine 166, and serine 182.

In terms of assembly, interacts with HSPA8. Interacts with TPH1. Interacts with TPH2. Expressed at high levels in brain, heart, and testis, and at reduced levels in kidney and stomach.

Its subcellular location is the cytoplasm. In terms of biological role, probable co-chaperone that participates in the proper folding of biopterin-dependent aromatic amino acid hydroxylases, which include phenylalanine-4-hydroxylase (PAH), tyrosine 3-monooxygenase (TH) and peripheral and neuronal tryptophan hydroxylases (TPH1 and TPH2). This chain is DnaJ homolog subfamily C member 12 (DNAJC12), found in Homo sapiens (Human).